Consider the following 1608-residue polypeptide: Hemolysin (1608 aa).

An N-terminal signal peptide occupies residues 1-30 (MKNNNFRLSAAGKLAAALAIILAASAGAYA). Disordered stretches follow at residues 296–315 (SRVDDASSNKNGGDNYQNYR), 452–488 (KSSERGYQRNHTSSLRTGRWSNSDESESLKASELRSE), 716–737 (EHTRDSEKTTRTENSASSLSGG), 971–1030 (AVNL…SASQ), 1168–1199 (AESTQTRKESKLSGNIDLGAGSSDSKEKTGGN), and 1437–1469 (PQQDTTGAVSFSKAEGKVTLPATPAGEKPQGPL). Polar residues-rich tracts occupy residues 303–313 (SNKNGGDNYQN) and 460–474 (RNHTSSLRTGRWSNS). 2 stretches are compositionally biased toward basic and acidic residues: residues 478–488 (ESLKASELRSE) and 716–726 (EHTRDSEKTTR). The segment covering 727–736 (TENSASSLSG) has biased composition (polar residues). Basic and acidic residues predominate over residues 977–996 (DSHRSEAAANRQDEQSRDTR). A compositionally biased stretch (polar residues) spans 1021-1030 (TQRSNSSASQ).

The protein localises to the cell outer membrane. Bacterial hemolysins are exotoxins that attack blood cell membranes and cause cell rupture by mechanisms not clearly defined. In terms of biological role, cell-bound hemolysin, which releases heme-iron from erythrocytes by interaction with the erythrocyte membrane. ShlA requires ShlB function. This is Hemolysin (shlA) from Serratia marcescens.